The chain runs to 235 residues: Motile sperm domain-containing protein 3 (235 aa).

Disordered stretches follow at residues Met1 to Pro25 and Glu143 to His171. In terms of domain architecture, MSP spans Pro33–Gln145. A compositionally biased stretch (pro residues) spans Asp149–Thr164. The next 2 helical transmembrane spans lie at Ser180 to Pro200 and Val213 to Leu233.

It is found in the membrane. The chain is Motile sperm domain-containing protein 3 (MOSPD3) from Homo sapiens (Human).